A 402-amino-acid chain; its full sequence is Zinc finger protein 586 (402 aa).

One can recognise a KRAB domain in the interval 15 to 87 (VTFEDVAVNF…DQGGHSGERP (73 aa)). The segment at 88–116 (YECGEYRKLFKNKSCLTEPRRDHKHRNVR) adopts a C2H2-type 1; degenerate zinc-finger fold. The segment at 122-144 (YECSKYGKLFHQKPTLHIHERFH) adopts a C2H2-type 2; degenerate zinc-finger fold. The C2H2-type 3; degenerate zinc-finger motif lies at 150–172 (YECSECGKSFHQSSSLLQRQTLH). C2H2-type zinc fingers lie at residues 178–200 (YECIECGKAFAEKSSLINHRKVH), 206–228 (YECNECGKSFAYTSSLIKHRRIH), 234–256 (YECSECGRSFAENSSLIKHLRVH), 262–284 (YECVECGKSFRRSSSLLQHQRVH), 290–312 (YECSECGKSFSLRSNLIHHQRVH), 317–339 (HECGQCGKSFSRKSSLIIHLRVH), 345–367 (YECSDCGKSFAENSSLIKHLRVH), and 373–395 (YECIDCGKSFRHSSSFRRHQRVH).

This sequence belongs to the krueppel C2H2-type zinc-finger protein family.

It is found in the nucleus. Functionally, may be involved in transcriptional regulation. The chain is Zinc finger protein 586 (ZNF586) from Homo sapiens (Human).